A 181-amino-acid chain; its full sequence is Acireductone dioxygenase (181 aa).

Fe(2+) contacts are provided by histidine 97, histidine 99, glutamate 103, and histidine 141. Ni(2+)-binding residues include histidine 97, histidine 99, glutamate 103, and histidine 141.

This sequence belongs to the acireductone dioxygenase (ARD) family. Monomer. It depends on Fe(2+) as a cofactor. Requires Ni(2+) as cofactor.

The catalysed reaction is 1,2-dihydroxy-5-(methylsulfanyl)pent-1-en-3-one + O2 = 3-(methylsulfanyl)propanoate + CO + formate + 2 H(+). The enzyme catalyses 1,2-dihydroxy-5-(methylsulfanyl)pent-1-en-3-one + O2 = 4-methylsulfanyl-2-oxobutanoate + formate + 2 H(+). The protein operates within amino-acid biosynthesis; L-methionine biosynthesis via salvage pathway; L-methionine from S-methyl-5-thio-alpha-D-ribose 1-phosphate: step 5/6. Catalyzes 2 different reactions between oxygen and the acireductone 1,2-dihydroxy-3-keto-5-methylthiopentene (DHK-MTPene) depending upon the metal bound in the active site. Fe-containing acireductone dioxygenase (Fe-ARD) produces formate and 2-keto-4-methylthiobutyrate (KMTB), the alpha-ketoacid precursor of methionine in the methionine recycle pathway. Ni-containing acireductone dioxygenase (Ni-ARD) produces methylthiopropionate, carbon monoxide and formate, and does not lie on the methionine recycle pathway. In Pseudomonas paraeruginosa (strain DSM 24068 / PA7) (Pseudomonas aeruginosa (strain PA7)), this protein is Acireductone dioxygenase.